Here is a 24-residue protein sequence, read N- to C-terminus: Coenzyme PQQ synthesis protein A (24 aa).

The segment at residues 16 to 20 (EITMY) is a cross-link (pyrroloquinoline quinone (Glu-Tyr)).

Belongs to the PqqA family.

It participates in cofactor biosynthesis; pyrroloquinoline quinone biosynthesis. Functionally, required for coenzyme pyrroloquinoline quinone (PQQ) biosynthesis. PQQ is probably formed by cross-linking a specific glutamate to a specific tyrosine residue and excising these residues from the peptide. This chain is Coenzyme PQQ synthesis protein A, found in Cupriavidus taiwanensis (strain DSM 17343 / BCRC 17206 / CCUG 44338 / CIP 107171 / LMG 19424 / R1) (Ralstonia taiwanensis (strain LMG 19424)).